The chain runs to 344 residues: Rho guanine nucleotide exchange factor 39 (344 aa).

The 176-residue stretch at 22–197 folds into the DH domain; that stretch reads KRVCTARELL…SETAQKVHAI (176 aa). One can recognise a PH domain in the interval 227 to 331; that stretch reads WFLRQGWLLV…WHHSLTLAIR (105 aa).

It is found in the cell membrane. Its function is as follows. Promotes cell proliferation. The polypeptide is Rho guanine nucleotide exchange factor 39 (Arhgef39) (Mus musculus (Mouse)).